A 365-amino-acid chain; its full sequence is Chaperone protein DnaJ (365 aa).

The 67-residue stretch at 4–70 (DYYKILGVDR…EKRRIYDQTG (67 aa)) folds into the J domain. The CR-type zinc finger occupies 139–220 (GTEKRIKFRR…CNGTGTIVVD (82 aa)). Zn(2+) is bound by residues C152, C155, C168, C171, C194, C197, C208, and C211. 4 CXXCXGXG motif repeats span residues 152–159 (CPDCKGTG), 168–175 (CPTCHGTG), 194–201 (CNTCGGKG), and 208–215 (CPRCNGTG).

Belongs to the DnaJ family. In terms of assembly, homodimer. Requires Zn(2+) as cofactor.

It localises to the cytoplasm. In terms of biological role, participates actively in the response to hyperosmotic and heat shock by preventing the aggregation of stress-denatured proteins and by disaggregating proteins, also in an autonomous, DnaK-independent fashion. Unfolded proteins bind initially to DnaJ; upon interaction with the DnaJ-bound protein, DnaK hydrolyzes its bound ATP, resulting in the formation of a stable complex. GrpE releases ADP from DnaK; ATP binding to DnaK triggers the release of the substrate protein, thus completing the reaction cycle. Several rounds of ATP-dependent interactions between DnaJ, DnaK and GrpE are required for fully efficient folding. Also involved, together with DnaK and GrpE, in the DNA replication of plasmids through activation of initiation proteins. The sequence is that of Chaperone protein DnaJ from Thermoplasma volcanium (strain ATCC 51530 / DSM 4299 / JCM 9571 / NBRC 15438 / GSS1).